The primary structure comprises 270 residues: Phosphatidylglycerol--prolipoprotein diacylglyceryl transferase (270 aa).

The next 4 membrane-spanning stretches (helical) occupy residues 18–38 (ITIY…LWLA), 55–75 (LVLF…VLFE), 90–110 (WQGG…GAVF), and 115–135 (GLSF…GQAI). Arg-137 lines the a 1,2-diacyl-sn-glycero-3-phospho-(1'-sn-glycerol) pocket. Transmembrane regions (helical) follow at residues 177–197 (HPTF…LLWL), 205–225 (GELF…IEGM), and 236–256 (LRAA…LWIV).

Belongs to the Lgt family.

It is found in the cell membrane. The catalysed reaction is L-cysteinyl-[prolipoprotein] + a 1,2-diacyl-sn-glycero-3-phospho-(1'-sn-glycerol) = an S-1,2-diacyl-sn-glyceryl-L-cysteinyl-[prolipoprotein] + sn-glycerol 1-phosphate + H(+). It functions in the pathway protein modification; lipoprotein biosynthesis (diacylglyceryl transfer). In terms of biological role, catalyzes the transfer of the diacylglyceryl group from phosphatidylglycerol to the sulfhydryl group of the N-terminal cysteine of a prolipoprotein, the first step in the formation of mature lipoproteins. The chain is Phosphatidylglycerol--prolipoprotein diacylglyceryl transferase from Geobacillus kaustophilus (strain HTA426).